The primary structure comprises 369 residues: Peptide chain release factor subunit 1 (369 aa).

This sequence belongs to the eukaryotic release factor 1 family. As to quaternary structure, heterodimer of two subunits, one of which binds GTP.

Its subcellular location is the cytoplasm. Its function is as follows. Directs the termination of nascent peptide synthesis (translation) in response to the termination codons UAA, UAG and UGA. The polypeptide is Peptide chain release factor subunit 1 (prf1) (Saccharolobus solfataricus (strain ATCC 35092 / DSM 1617 / JCM 11322 / P2) (Sulfolobus solfataricus)).